The primary structure comprises 408 residues: Glutamate N-acetyltransferase (408 aa).

Substrate contacts are provided by Thr150, Lys176, Thr189, Glu271, Asn403, and Thr408. The active-site Nucleophile is Thr189.

It belongs to the ArgJ family. In terms of assembly, heterotetramer of two alpha and two beta chains.

It localises to the cytoplasm. The catalysed reaction is N(2)-acetyl-L-ornithine + L-glutamate = N-acetyl-L-glutamate + L-ornithine. The protein operates within amino-acid biosynthesis; L-arginine biosynthesis; L-ornithine and N-acetyl-L-glutamate from L-glutamate and N(2)-acetyl-L-ornithine (cyclic): step 1/1. Its function is as follows. Catalyzes the transfer of the acetyl group from N(2)-acetylornithine to glutamate, forming N-acetylglutamate and L-ornithine. The chain is Glutamate N-acetyltransferase from Methanococcus maripaludis (strain DSM 14266 / JCM 13030 / NBRC 101832 / S2 / LL).